Here is a 163-residue protein sequence, read N- to C-terminus: NADH-quinone oxidoreductase subunit I (163 aa).

4Fe-4S ferredoxin-type domains are found at residues 54-84 (LRRY…IDSA) and 94-123 (TRYD…ETHI). Residues cysteine 64, cysteine 67, cysteine 70, cysteine 74, cysteine 103, cysteine 106, cysteine 109, and cysteine 113 each coordinate [4Fe-4S] cluster.

This sequence belongs to the complex I 23 kDa subunit family. As to quaternary structure, NDH-1 is composed of 14 different subunits. Subunits NuoA, H, J, K, L, M, N constitute the membrane sector of the complex. The cofactor is [4Fe-4S] cluster.

It is found in the cell inner membrane. The catalysed reaction is a quinone + NADH + 5 H(+)(in) = a quinol + NAD(+) + 4 H(+)(out). NDH-1 shuttles electrons from NADH, via FMN and iron-sulfur (Fe-S) centers, to quinones in the respiratory chain. The immediate electron acceptor for the enzyme in this species is believed to be ubiquinone. Couples the redox reaction to proton translocation (for every two electrons transferred, four hydrogen ions are translocated across the cytoplasmic membrane), and thus conserves the redox energy in a proton gradient. The polypeptide is NADH-quinone oxidoreductase subunit I (Xanthomonas oryzae pv. oryzae (strain KACC10331 / KXO85)).